A 149-amino-acid chain; its full sequence is Protein SprT-like (149 aa).

In terms of domain architecture, SprT-like spans 6–147 (LQKLTEDISL…CGKCRGKIKR (142 aa)). Residue histidine 67 coordinates Zn(2+). Glutamate 68 is a catalytic residue. Zn(2+) is bound at residue histidine 71.

The protein belongs to the SprT family. It depends on Zn(2+) as a cofactor.

The protein resides in the cytoplasm. This Bacillus velezensis (strain DSM 23117 / BGSC 10A6 / LMG 26770 / FZB42) (Bacillus amyloliquefaciens subsp. plantarum) protein is Protein SprT-like.